We begin with the raw amino-acid sequence, 201 residues long: Proteasome subunit beta type-2 (201 aa).

Met-1 is modified (N-acetylmethionine).

The protein belongs to the peptidase T1B family. In terms of assembly, the 26S proteasome consists of a 20S proteasome core and two 19S regulatory subunits. The 20S proteasome core is a barrel-shaped complex made of 28 subunits that are arranged in four stacked rings. The two outer rings are each formed by seven alpha subunits, and the two inner rings are formed by seven beta subunits. The proteolytic activity is exerted by three beta-subunits PSMB5, PSMB6 and PSMB7. (Microbial infection) Interacts with HIV-1 protein Tat.

It is found in the cytoplasm. The protein resides in the nucleus. Its function is as follows. Non-catalytic component of the 20S core proteasome complex involved in the proteolytic degradation of most intracellular proteins. This complex plays numerous essential roles within the cell by associating with different regulatory particles. Associated with two 19S regulatory particles, forms the 26S proteasome and thus participates in the ATP-dependent degradation of ubiquitinated proteins. The 26S proteasome plays a key role in the maintenance of protein homeostasis by removing misfolded or damaged proteins that could impair cellular functions, and by removing proteins whose functions are no longer required. Associated with the PA200 or PA28, the 20S proteasome mediates ubiquitin-independent protein degradation. This type of proteolysis is required in several pathways including spermatogenesis (20S-PA200 complex) or generation of a subset of MHC class I-presented antigenic peptides (20S-PA28 complex). The protein is Proteasome subunit beta type-2 of Homo sapiens (Human).